The primary structure comprises 351 residues: F-box protein At1g70590 (351 aa).

The interval 1–60 is disordered; the sequence is MKQRTWPCRSEGSRFSSLSFLKPHDKDKRSRISSINKATAKSTTSSRSSSSSSSSRPPSN. Polar residues predominate over residues 32–41; sequence ISSINKATAK. The segment covering 42–59 has biased composition (low complexity); it reads STTSSRSSSSSSSSRPPS. The F-box domain maps to 62–111; sequence FGDFSMLPYDILMKIAAPFSHPNLQAASLVCKSWRDALKPLRESMLLIRW. The stretch at 105-141 is one Sel1-like repeat; that stretch reads SMLLIRWGKKYKHGRGGVRANLDKALDSFLKGAMRGS. One copy of the TPR repeat lies at 142-175; that stretch reads TLAMVDAGLVYWERGEKEKAVNLYRRASELGDAV.

This Arabidopsis thaliana (Mouse-ear cress) protein is F-box protein At1g70590.